Here is a 206-residue protein sequence, read N- to C-terminus: MTKLSKRQLDILRFIKEEVKTKGYPPSVREIGEAVGLASSSTVHGHLARLETKGLIRRDPTKPRAIEVLDEEEVQIPKSQVVNVPVIGKVTAGIPITAVENIDEYFPLPDRMVPPGEHVFMLEIMGESMIDAGIFDKDYVIVKQQNTANNGEIVVAMTEDDEATVKRFYKEDNYVRLQPENPTMEPIILQNVSILGKVIGVFRTVH.

Residues 28 to 48 (VREIGEAVGLASSSTVHGHLA) constitute a DNA-binding region (H-T-H motif). Active-site for autocatalytic cleavage activity residues include serine 128 and lysine 166.

Belongs to the peptidase S24 family. Homodimer.

It catalyses the reaction Hydrolysis of Ala-|-Gly bond in repressor LexA.. Functionally, represses a number of genes involved in the response to DNA damage (SOS response), including recA and lexA. In the presence of single-stranded DNA, RecA interacts with LexA causing an autocatalytic cleavage which disrupts the DNA-binding part of LexA, leading to derepression of the SOS regulon and eventually DNA repair. This is LexA repressor from Bacillus velezensis (strain DSM 23117 / BGSC 10A6 / LMG 26770 / FZB42) (Bacillus amyloliquefaciens subsp. plantarum).